The chain runs to 160 residues: Phosphopantetheine adenylyltransferase (160 aa).

Ser8 serves as a coordination point for substrate. ATP contacts are provided by residues Ser8–Phe9 and His16. Substrate is bound by residues Lys40, Leu73, and Lys87. ATP-binding positions include Gly88–Arg90, Glu98, and Tyr122–Thr128.

It belongs to the bacterial CoaD family. As to quaternary structure, homohexamer. The cofactor is Mg(2+).

The protein localises to the cytoplasm. The enzyme catalyses (R)-4'-phosphopantetheine + ATP + H(+) = 3'-dephospho-CoA + diphosphate. It participates in cofactor biosynthesis; coenzyme A biosynthesis; CoA from (R)-pantothenate: step 4/5. Reversibly transfers an adenylyl group from ATP to 4'-phosphopantetheine, yielding dephospho-CoA (dPCoA) and pyrophosphate. This is Phosphopantetheine adenylyltransferase from Corynebacterium glutamicum (strain R).